Consider the following 118-residue polypeptide: Holo-[acyl-carrier-protein] synthase (118 aa).

Aspartate 8 and glutamate 58 together coordinate Mg(2+).

Belongs to the P-Pant transferase superfamily. AcpS family. Mg(2+) serves as cofactor.

The protein resides in the cytoplasm. The catalysed reaction is apo-[ACP] + CoA = holo-[ACP] + adenosine 3',5'-bisphosphate + H(+). Transfers the 4'-phosphopantetheine moiety from coenzyme A to a Ser of acyl-carrier-protein. The sequence is that of Holo-[acyl-carrier-protein] synthase from Streptococcus pyogenes serotype M1.